The chain runs to 155 residues: Arginine repressor (155 aa).

It belongs to the ArgR family.

The protein localises to the cytoplasm. It participates in amino-acid biosynthesis; L-arginine biosynthesis [regulation]. Its function is as follows. Regulates arginine biosynthesis genes. The polypeptide is Arginine repressor (Histophilus somni (strain 129Pt) (Haemophilus somnus)).